The primary structure comprises 372 residues: MNLSEIAYRRVVVKLGTSVLTSGSKQLDKAHMVELARQMAALMRSGVEVVLCTSGAIAAGREHLQYPALPDTMANKQLLAAVGQSQLILAWAQLFSIYGLHVGQLLLTRADLHDRERYLNARDTLNALLANNIIPIINENDAVATNEIKVGDNDNLSARAALLCDADLLILLTDQKGLFDADPRTNPNAKLISQVEKIDDSLRLLAGGSVSGLGTGGMSTKLEAADIARRAGIEVVIASGHHPDVIKKVVAKESIGTHFSAIENPLESRKQWILAGPAAQGSLVLDAGAVKAVTEKGRSLLSKGIIGVKGEFERGATLQLVDQNGKIIARGITRYCGEALGLIAGKHSDEIESVLGYDYGDAIVHRNDMVVL.

Position 14 (Lys-14) interacts with ATP. Positions 54, 141, and 153 each coordinate substrate. Residues 173-174 (TD) and 215-221 (TGGMSTK) contribute to the ATP site. The 79-residue stretch at 280–358 (QGSLVLDAGA…DEIESVLGYD (79 aa)) folds into the PUA domain.

The protein belongs to the glutamate 5-kinase family.

The protein localises to the cytoplasm. The enzyme catalyses L-glutamate + ATP = L-glutamyl 5-phosphate + ADP. Its pathway is amino-acid biosynthesis; L-proline biosynthesis; L-glutamate 5-semialdehyde from L-glutamate: step 1/2. Its function is as follows. Catalyzes the transfer of a phosphate group to glutamate to form L-glutamate 5-phosphate. This is Glutamate 5-kinase from Shewanella oneidensis (strain ATCC 700550 / JCM 31522 / CIP 106686 / LMG 19005 / NCIMB 14063 / MR-1).